The chain runs to 626 residues: Chaperone protein HtpG (626 aa).

The a; substrate-binding stretch occupies residues 1 to 341 (MRKKKFKAES…SEDLSLNISR (341 aa)). Residues 342 to 552 (EMLQHDRQLK…DGEVTIEMEK (211 aa)) are b. Positions 553–626 (VLNAMPDSQQ…FTNDICKVMV (74 aa)) are c.

It belongs to the heat shock protein 90 family. Homodimer.

The protein resides in the cytoplasm. In terms of biological role, molecular chaperone. Has ATPase activity. The protein is Chaperone protein HtpG of Bacillus velezensis (strain DSM 23117 / BGSC 10A6 / LMG 26770 / FZB42) (Bacillus amyloliquefaciens subsp. plantarum).